The primary structure comprises 533 residues: Beta-1,4-mannosyl-glycoprotein 4-beta-N-acetylglucosaminyltransferase (533 aa).

Topologically, residues 1–7 are cytoplasmic; that stretch reads MKMRRYK. Residues 8–23 form a helical; Signal-anchor for type II membrane protein membrane-spanning segment; it reads LFLMFCMAGLCLISFL. Over 24 to 533 the chain is Lumenal; it reads HFFKTLSYVT…ARGKLDEAEV (510 aa). Residues 119 to 158 are disordered; the sequence is KPGTKMLERPPPGRPEEKPEGANGSSARRPPRYLLSARER. Residues Asn141, Asn241, Asn259, and Asn397 are each glycosylated (N-linked (GlcNAc...) asparagine). The disordered stretch occupies residues 507–533; sequence STAAGGWRHRGPEGRPPARGKLDEAEV.

It belongs to the glycosyltransferase 17 family. In terms of assembly, interacts with MGAT4D.

It localises to the golgi apparatus membrane. The enzyme catalyses N(4)-{beta-D-GlcNAc-(1-&gt;2)-alpha-D-Man-(1-&gt;3)-[beta-D-GlcNAc-(1-&gt;2)-alpha-D-Man-(1-&gt;6)]-beta-D-Man-(1-&gt;4)-beta-D-GlcNAc-(1-&gt;4)-beta-D-GlcNAc}-L-asparaginyl-[protein] + UDP-N-acetyl-alpha-D-glucosamine = N(4)-{beta-D-GlcNAc-(1-&gt;2)-alpha-D-Man-(1-&gt;3)-[beta-D-GlcNAc-(1-&gt;4)]-[beta-D-GlcNAc-(1-&gt;2)-alpha-D-Man-(1-&gt;6)]-beta-D-Man-(1-&gt;4)-beta-D-GlcNAc-(1-&gt;4)-beta-D-GlcNAc}-L-asparaginyl-[protein] + UDP + H(+). It participates in protein modification; protein glycosylation. Functionally, it is involved in the regulation of the biosynthesis and biological function of glycoprotein oligosaccharides. Catalyzes the addition of N-acetylglucosamine in beta 1-4 linkage to the beta-linked mannose of the trimannosyl core of N-linked sugar chains, called bisecting N-acetylglucosamine (GlcNAc). It is one of the most important enzymes involved in the regulation of the biosynthesis of glycoprotein oligosaccharides. The addition of this bisecting GlcNAc residue alters not only the composition, but also the conformation of the N-glycan. The introduction of the bisecting GlcNAc residue results in the suppression of further processing and elongation of N-glycans, precluding the formation of beta-1,6 GlcNAc branching, catalyzed by MGAT5 since it is unable to use the bisected oligosaccharide as a substrate. Addition of bisecting N-acetylglucosamine to CDH1/E-cadherin modulates CDH1 cell membrane location. Inhibits NeuAc-alpha-2,3-Gal-beta-1,4-GlcNAc- formation which modulates sialylation levels and plays a role in cell migration regulation. In brain, addition of bisecting N-acetylglucosamine to BACE1 blocks its lysosomal targeting in response to oxidative stress and further degradation which increases its location to early endosome and the APP cleavage. The chain is Beta-1,4-mannosyl-glycoprotein 4-beta-N-acetylglucosaminyltransferase from Homo sapiens (Human).